Consider the following 439-residue polypeptide: Glutamate--tRNA ligase 2 (439 aa).

The 'HIGH' region motif lies at 9–19; sequence PSPTGHLHVGN. The short motif at 233–237 is the 'KMSKS' region element; sequence KLSKR. Lys236 is a binding site for ATP.

It belongs to the class-I aminoacyl-tRNA synthetase family. Glutamate--tRNA ligase type 1 subfamily. Monomer.

It localises to the cytoplasm. The catalysed reaction is tRNA(Glu) + L-glutamate + ATP = L-glutamyl-tRNA(Glu) + AMP + diphosphate. In terms of biological role, catalyzes the attachment of glutamate to tRNA(Glu) in a two-step reaction: glutamate is first activated by ATP to form Glu-AMP and then transferred to the acceptor end of tRNA(Glu). The polypeptide is Glutamate--tRNA ligase 2 (Sphingopyxis alaskensis (strain DSM 13593 / LMG 18877 / RB2256) (Sphingomonas alaskensis)).